Reading from the N-terminus, the 351-residue chain is Phosphoribosylformylglycinamidine cyclo-ligase (351 aa).

Belongs to the AIR synthase family.

The protein localises to the cytoplasm. The catalysed reaction is 2-formamido-N(1)-(5-O-phospho-beta-D-ribosyl)acetamidine + ATP = 5-amino-1-(5-phospho-beta-D-ribosyl)imidazole + ADP + phosphate + H(+). Its pathway is purine metabolism; IMP biosynthesis via de novo pathway; 5-amino-1-(5-phospho-D-ribosyl)imidazole from N(2)-formyl-N(1)-(5-phospho-D-ribosyl)glycinamide: step 2/2. In Synechococcus sp. (strain JA-3-3Ab) (Cyanobacteria bacterium Yellowstone A-Prime), this protein is Phosphoribosylformylglycinamidine cyclo-ligase.